A 1129-amino-acid polypeptide reads, in one-letter code: ATP-dependent DNA helicase mph1 (1129 aa).

Disordered regions lie at residues 1-101, 124-222, and 236-306; these read MTGS…FEDA, TQLT…QNEG, and DAFD…TQHK. The segment covering 45-63 has biased composition (basic and acidic residues); it reads DGTASDVRRRPSENRESQR. 2 stretches are compositionally biased toward polar residues: residues 203-222 and 242-285; these read NTKA…QNEG and ISLS…QTDQ. The segment covering 297 to 306 has biased composition (basic and acidic residues); that stretch reads QKDEPPTQHK. Residues 331–499 enclose the Helicase ATP-binding domain; the sequence is IAQKGLFHNL…AVIDGLDIAR (169 aa). 344–351 contacts ATP; the sequence is LPTGLGKT. A DEAH box motif is present at residues 447–450; that stretch reads DEAH. The Helicase C-terminal domain occupies 674-843; it reads VLNHFMDAGE…GSRFTFHDDI (170 aa). Disordered regions lie at residues 863–930, 1018–1060, and 1072–1129; these read IPDE…VEIP, RQGD…STED, and SVVK…DSDD. Basic residues-rich tracts occupy residues 877 to 889 and 1028 to 1044; these read RRGR…PKKF and SPRH…KPRY. Residues 1077–1086 show a composition bias toward polar residues; sequence QKQQPFYSSQ.

The protein belongs to the DEAD box helicase family. DEAH subfamily. FANCM sub-subfamily. In terms of assembly, interacts with the MHF histone-fold complex to form the FANCM-MHF complex.

Its subcellular location is the nucleus. The enzyme catalyses ATP + H2O = ADP + phosphate + H(+). Functionally, ATP-dependent DNA helicase involved in DNA damage repair by homologous recombination and in genome maintenance. Capable of unwinding D-loops. Plays a role in limiting crossover recombinants during mitotic DNA double-strand break (DSB) repair. Component of a FANCM-MHF complex which promotes gene conversion at blocked replication forks, probably by reversal of the stalled fork. This is ATP-dependent DNA helicase mph1 from Aspergillus oryzae (strain ATCC 42149 / RIB 40) (Yellow koji mold).